Consider the following 232-residue polypeptide: Cytidylate kinase (232 aa).

10-18 (GPAASGKST) is a binding site for ATP.

Belongs to the cytidylate kinase family. Type 1 subfamily.

The protein resides in the cytoplasm. It catalyses the reaction CMP + ATP = CDP + ADP. It carries out the reaction dCMP + ATP = dCDP + ADP. This chain is Cytidylate kinase, found in Phytoplasma mali (strain AT).